Reading from the N-terminus, the 371-residue chain is UDP-N-acetylglucosamine--N-acetylmuramyl-(pentapeptide) pyrophosphoryl-undecaprenol N-acetylglucosamine transferase (371 aa).

Residues 15–17 (TGG), Asn-126, Arg-172, Ser-199, Ile-256, 275–280 (ALTVSE), and Gln-301 each bind UDP-N-acetyl-alpha-D-glucosamine.

Belongs to the glycosyltransferase 28 family. MurG subfamily.

It localises to the cell inner membrane. The catalysed reaction is di-trans,octa-cis-undecaprenyl diphospho-N-acetyl-alpha-D-muramoyl-L-alanyl-D-glutamyl-meso-2,6-diaminopimeloyl-D-alanyl-D-alanine + UDP-N-acetyl-alpha-D-glucosamine = di-trans,octa-cis-undecaprenyl diphospho-[N-acetyl-alpha-D-glucosaminyl-(1-&gt;4)]-N-acetyl-alpha-D-muramoyl-L-alanyl-D-glutamyl-meso-2,6-diaminopimeloyl-D-alanyl-D-alanine + UDP + H(+). It participates in cell wall biogenesis; peptidoglycan biosynthesis. Its function is as follows. Cell wall formation. Catalyzes the transfer of a GlcNAc subunit on undecaprenyl-pyrophosphoryl-MurNAc-pentapeptide (lipid intermediate I) to form undecaprenyl-pyrophosphoryl-MurNAc-(pentapeptide)GlcNAc (lipid intermediate II). The sequence is that of UDP-N-acetylglucosamine--N-acetylmuramyl-(pentapeptide) pyrophosphoryl-undecaprenol N-acetylglucosamine transferase from Francisella tularensis subsp. tularensis (strain WY96-3418).